Consider the following 245-residue polypeptide: Ribonuclease 3 (245 aa).

Residues 17–146 form the RNase III domain; the sequence is FTDKMKSLGL…FVGALYLDQG (130 aa). Position 59 (Glu59) interacts with Mg(2+). The active site involves Asp63. Mg(2+)-binding residues include Asp132 and Glu135. Glu135 is a catalytic residue. Residues 172–241 enclose the DRBM domain; the sequence is DFKTQFQEYV…AEQAYKLMKN (70 aa).

This sequence belongs to the ribonuclease III family. Homodimer. It depends on Mg(2+) as a cofactor.

Its subcellular location is the cytoplasm. The catalysed reaction is Endonucleolytic cleavage to 5'-phosphomonoester.. Its function is as follows. Digests double-stranded RNA. Involved in the processing of primary rRNA transcript to yield the immediate precursors to the large and small rRNAs (23S and 16S). Processes some mRNAs, and tRNAs when they are encoded in the rRNA operon. Processes pre-crRNA and tracrRNA of type II CRISPR loci if present in the organism. The polypeptide is Ribonuclease 3 (Staphylococcus epidermidis (strain ATCC 35984 / DSM 28319 / BCRC 17069 / CCUG 31568 / BM 3577 / RP62A)).